The sequence spans 535 residues: High-affinity fructose transporter ght6 (535 aa).

The Cytoplasmic portion of the chain corresponds to 1-9; the sequence is MAKILTIVM. A helical transmembrane segment spans residues 10–30; sequence LVFVSMAGWMFGADTGSIGGI. The Extracellular segment spans residues 31-58; the sequence is TNMRDFQSRYADRYDPVTDTYSYSSARQ. A helical membrane pass occupies residues 59–79; that stretch reads GLLVGMVNTGTTVGCLLSSPL. The Cytoplasmic portion of the chain corresponds to 80 to 87; it reads GDRFGKRK. The helical transmembrane segment at 88–108 threads the bilayer; that stretch reads CIMGWTLVYITGVIVQLTTIP. Topologically, residues 109 to 112 are extracellular; the sequence is SWVQ. A helical transmembrane segment spans residues 113–133; that stretch reads MMVAKIWTGLGIGALSVIAPG. At 134–144 the chain is on the cytoplasmic side; sequence YQSESSPPHIR. A helical membrane pass occupies residues 145 to 165; it reads GAIVTTYQLFITLGIFIAACI. At 166 to 181 the chain is on the extracellular side; it reads NMGTHKYTTHPEAQWR. A helical transmembrane segment spans residues 182 to 202; the sequence is VPIGINLLWGILMFFGMLFLP. The Cytoplasmic segment spans residues 203-268; the sequence is ESPRYLAVKG…IFSNEIRYRT (66 aa). The helical transmembrane segment at 269-287 threads the bilayer; the sequence is LLGMGVMAFQQLTGNNYFF. The Extracellular segment spans residues 288-303; the sequence is YYGTQVFRGTGLNSPF. The chain crosses the membrane as a helical span at residues 304 to 324; it reads LAALILDAVNFGCTFGAIFVL. At 325 to 330 the chain is on the cytoplasmic side; the sequence is EYFGRR. A helical membrane pass occupies residues 331 to 351; the sequence is GPLIVGGVWQSICFFIYASVG. The Extracellular segment spans residues 352–365; sequence DRALTRPNGTSNHR. N359 carries N-linked (GlcNAc...) asparagine glycosylation. The helical transmembrane segment at 366-386 threads the bilayer; the sequence is AGAVMIVFSCLFIFSFAQTWA. Over 387-406 the chain is Cytoplasmic; sequence PAAYVIVGESYPIRYRSKCA. The chain crosses the membrane as a helical span at residues 407–427; that stretch reads AVATASNWFWNFMISFFTPFI. Residues 428 to 434 are Extracellular-facing; sequence SNSIGFK. The helical transmembrane segment at 435–455 threads the bilayer; the sequence is YGYVFAACNLCAAIIIFLFAK. Residues 456-535 lie on the Cytoplasmic side of the membrane; the sequence is ETKGLTLEEI…PQQVTNPVGL (80 aa). The span at 484 to 508 shows a compositional bias: basic and acidic residues; the sequence is DREDIKQSDSEKERGPTSKLHEYVE. A disordered region spans residues 484 to 535; sequence DREDIKQSDSEKERGPTSKLHEYVEHAPNSYASTHSTESENYPQQVTNPVGL. A compositionally biased stretch (polar residues) spans 513-535; sequence SYASTHSTESENYPQQVTNPVGL.

This sequence belongs to the major facilitator superfamily. Sugar transporter (TC 2.A.1.1) family.

It is found in the membrane. High-affinity fructose transporter. The protein is High-affinity fructose transporter ght6 (ght6) of Schizosaccharomyces pombe (strain 972 / ATCC 24843) (Fission yeast).